Here is a 57-residue protein sequence, read N- to C-terminus: Peptide BmKa1 (57 aa).

The N-terminal stretch at 1-22 (MKPRVFFLLFLLVAAMIETGES) is a signal peptide. 2 stretches are compositionally biased toward acidic residues: residues 20–29 (GESEENEEGS) and 45–57 (VDNE…GDSD). Residues 20-57 (GESEENEEGSNESGKSTEAKNTDASVDNEDSDIDGDSD) form a disordered region.

This sequence belongs to the non-disulfide-bridged peptide (NDBP) superfamily. In terms of tissue distribution, expressed by the venom gland.

It localises to the secreted. The sequence is that of Peptide BmKa1 from Olivierus martensii (Manchurian scorpion).